A 296-amino-acid polypeptide reads, in one-letter code: 4-hydroxy-tetrahydrodipicolinate synthase (296 aa).

Thr47 contributes to the pyruvate binding site. Tyr135 serves as the catalytic Proton donor/acceptor. The Schiff-base intermediate with substrate role is filled by Lys164. Ile207 serves as a coordination point for pyruvate.

This sequence belongs to the DapA family. Homotetramer; dimer of dimers.

It is found in the cytoplasm. It carries out the reaction L-aspartate 4-semialdehyde + pyruvate = (2S,4S)-4-hydroxy-2,3,4,5-tetrahydrodipicolinate + H2O + H(+). The protein operates within amino-acid biosynthesis; L-lysine biosynthesis via DAP pathway; (S)-tetrahydrodipicolinate from L-aspartate: step 3/4. Its function is as follows. Catalyzes the condensation of (S)-aspartate-beta-semialdehyde [(S)-ASA] and pyruvate to 4-hydroxy-tetrahydrodipicolinate (HTPA). This Karelsulcia muelleri (strain GWSS) (Sulcia muelleri) protein is 4-hydroxy-tetrahydrodipicolinate synthase.